A 997-amino-acid chain; its full sequence is Translation initiation factor IF-2 (997 aa).

The tract at residues Glu-101 to His-406 is disordered. Composition is skewed to low complexity over residues Ala-116 to Pro-185 and Ala-195 to Lys-209. The segment covering Thr-231 to Ala-242 has biased composition (polar residues). Over residues Ala-256–Pro-280 the composition is skewed to low complexity. Over residues Asp-281–Glu-292 the composition is skewed to basic and acidic residues. A compositionally biased stretch (gly residues) spans Arg-385–Gly-394. The tr-type G domain occupies Pro-498–Glu-665. The interval Gly-507 to Thr-514 is G1. Position 507-514 (Gly-507–Thr-514) interacts with GTP. The interval Gly-532–His-536 is G2. The interval Asp-553–Gly-556 is G3. GTP contacts are provided by residues Asp-553–His-557 and Asn-607–Asp-610. Residues Asn-607 to Asp-610 form a G4 region. A G5 region spans residues Ser-643 to Lys-645.

The protein belongs to the TRAFAC class translation factor GTPase superfamily. Classic translation factor GTPase family. IF-2 subfamily.

The protein localises to the cytoplasm. One of the essential components for the initiation of protein synthesis. Protects formylmethionyl-tRNA from spontaneous hydrolysis and promotes its binding to the 30S ribosomal subunits. Also involved in the hydrolysis of GTP during the formation of the 70S ribosomal complex. This chain is Translation initiation factor IF-2, found in Bordetella pertussis (strain Tohama I / ATCC BAA-589 / NCTC 13251).